The chain runs to 68 residues: Large ribosomal subunit protein bL31 (68 aa).

4 residues coordinate Zn(2+): C16, C18, C37, and C40.

This sequence belongs to the bacterial ribosomal protein bL31 family. Type A subfamily. Part of the 50S ribosomal subunit. Zn(2+) is required as a cofactor.

In terms of biological role, binds the 23S rRNA. This is Large ribosomal subunit protein bL31 from Aquifex aeolicus (strain VF5).